A 206-amino-acid polypeptide reads, in one-letter code: Ribosomal RNA large subunit methyltransferase E (206 aa).

S-adenosyl-L-methionine-binding residues include Gly60, Trp62, Asp80, Asp96, and Asp121. Lys161 functions as the Proton acceptor in the catalytic mechanism.

Belongs to the class I-like SAM-binding methyltransferase superfamily. RNA methyltransferase RlmE family.

It is found in the cytoplasm. The enzyme catalyses uridine(2552) in 23S rRNA + S-adenosyl-L-methionine = 2'-O-methyluridine(2552) in 23S rRNA + S-adenosyl-L-homocysteine + H(+). Specifically methylates the uridine in position 2552 of 23S rRNA at the 2'-O position of the ribose in the fully assembled 50S ribosomal subunit. This is Ribosomal RNA large subunit methyltransferase E from Saccharophagus degradans (strain 2-40 / ATCC 43961 / DSM 17024).